We begin with the raw amino-acid sequence, 260 residues long: Ribosomal RNA small subunit methyltransferase A (260 aa).

S-adenosyl-L-methionine-binding residues include leucine 23, glycine 48, glutamate 69, aspartate 94, and asparagine 110.

Belongs to the class I-like SAM-binding methyltransferase superfamily. rRNA adenine N(6)-methyltransferase family. RsmA subfamily.

Its subcellular location is the cytoplasm. The enzyme catalyses adenosine(1518)/adenosine(1519) in 16S rRNA + 4 S-adenosyl-L-methionine = N(6)-dimethyladenosine(1518)/N(6)-dimethyladenosine(1519) in 16S rRNA + 4 S-adenosyl-L-homocysteine + 4 H(+). In terms of biological role, specifically dimethylates two adjacent adenosines (A1518 and A1519) in the loop of a conserved hairpin near the 3'-end of 16S rRNA in the 30S particle. May play a critical role in biogenesis of 30S subunits. This is Ribosomal RNA small subunit methyltransferase A from Thermotoga petrophila (strain ATCC BAA-488 / DSM 13995 / JCM 10881 / RKU-1).